We begin with the raw amino-acid sequence, 384 residues long: S-adenosylmethionine synthase (384 aa).

His-15 provides a ligand contact to ATP. Asp-17 is a Mg(2+) binding site. Residue Glu-43 participates in K(+) binding. The L-methionine site is built by Glu-56 and Gln-99. Residues 99-109 (QSPDINQGVDK) form a flexible loop region. Residues 164-166 (DAK), 230-231 (RF), Asp-239, 245-246 (RK), Ala-262, and Lys-266 each bind ATP. Asp-239 contacts L-methionine. Residue Lys-270 participates in L-methionine binding.

It belongs to the AdoMet synthase family. Homotetramer; dimer of dimers. Mg(2+) serves as cofactor. The cofactor is K(+).

The protein resides in the cytoplasm. The enzyme catalyses L-methionine + ATP + H2O = S-adenosyl-L-methionine + phosphate + diphosphate. It functions in the pathway amino-acid biosynthesis; S-adenosyl-L-methionine biosynthesis; S-adenosyl-L-methionine from L-methionine: step 1/1. Catalyzes the formation of S-adenosylmethionine (AdoMet) from methionine and ATP. The overall synthetic reaction is composed of two sequential steps, AdoMet formation and the subsequent tripolyphosphate hydrolysis which occurs prior to release of AdoMet from the enzyme. The chain is S-adenosylmethionine synthase from Vibrio parahaemolyticus serotype O3:K6 (strain RIMD 2210633).